Here is an 859-residue protein sequence, read N- to C-terminus: DNA mismatch repair protein MutS (859 aa).

617–624 (GPNMGGKS) provides a ligand contact to ATP. Positions 801–820 (TSLPHEVAPQAPGKPSVPQQ) are disordered.

Belongs to the DNA mismatch repair MutS family.

In terms of biological role, this protein is involved in the repair of mismatches in DNA. It is possible that it carries out the mismatch recognition step. This protein has a weak ATPase activity. In Pseudomonas fluorescens (strain ATCC BAA-477 / NRRL B-23932 / Pf-5), this protein is DNA mismatch repair protein MutS.